The sequence spans 845 residues: Putative DEAD-box ATP-dependent RNA helicase 33 (845 aa).

Disordered stretches follow at residues 129–149 (GHPD…PMSP) and 282–302 (KFRK…NEGK). Over residues 289–298 (STEEDSDEEG) the composition is skewed to acidic residues. Positions 375–403 (KRFDESCISPLTLKALSASGIVKMTRVQD) match the Q motif motif. The Helicase ATP-binding domain occupies 406-590 (LSECLDGKDA…QLVLKRDHSY (185 aa)). An ATP-binding site is contributed by 419–426 (AKTGTGKS). The short motif at 538-541 (DEAD) is the DEAD box element. In terms of domain architecture, Helicase C-terminal spans 624 to 778 (LLKEHINNMP…QVDQSMAKID (155 aa)).

This sequence belongs to the DEAD box helicase family.

It catalyses the reaction ATP + H2O = ADP + phosphate + H(+). The polypeptide is Putative DEAD-box ATP-dependent RNA helicase 33 (RH33) (Arabidopsis thaliana (Mouse-ear cress)).